We begin with the raw amino-acid sequence, 480 residues long: Adenylosuccinate synthetase, chloroplastic (480 aa).

The N-terminal 54 residues, 1-54 (MATARVMVADRARAFGGTTATRARRDDQGRRVTIARGIPSRARVVVARASERAY), are a transit peptide targeting the chloroplast. GTP is bound by residues 69-75 (GDEGKGK) and 97-99 (GHT). Aspartate 70 (proton acceptor) is an active-site residue. Mg(2+)-binding residues include aspartate 70 and glycine 97. Residues 70-73 (DEGK), 95-98 (NAGH), threonine 187, arginine 201, asparagine 278, threonine 293, and arginine 357 contribute to the IMP site. Histidine 98 acts as the Proton donor in catalysis. 353–359 (TTTGRPR) lines the substrate pocket. GTP is bound by residues arginine 359, 385–387 (KLD), and 468–470 (GVG).

Belongs to the adenylosuccinate synthetase family. In terms of assembly, homodimer. Mg(2+) is required as a cofactor.

It localises to the plastid. The protein resides in the chloroplast. The enzyme catalyses IMP + L-aspartate + GTP = N(6)-(1,2-dicarboxyethyl)-AMP + GDP + phosphate + 2 H(+). It participates in purine metabolism; AMP biosynthesis via de novo pathway; AMP from IMP: step 1/2. Functionally, plays an important role in the de novo pathway and in the salvage pathway of purine nucleotide biosynthesis. Catalyzes the first committed step in the biosynthesis of AMP from IMP. The protein is Adenylosuccinate synthetase, chloroplastic of Ostreococcus tauri.